We begin with the raw amino-acid sequence, 75 residues long: Small ribosomal subunit protein bS18c (75 aa).

It belongs to the bacterial ribosomal protein bS18 family. In terms of assembly, part of the 30S ribosomal subunit.

The protein resides in the plastid. The protein localises to the chloroplast. This is Small ribosomal subunit protein bS18c from Psilotum nudum (Whisk fern).